Here is a 448-residue protein sequence, read N- to C-terminus: Hyaluronidase conohyal-Cn1 (448 aa).

Positions 1-18 are cleaved as a signal peptide; it reads MRAVVVVTGLVVVVVATA. A propeptide spanning residues 19-33 is cleaved from the precursor; that stretch reads LSLPNHDVKSATSSR. A disordered region spans residues 26-55; that stretch reads VKSATSSRSSSDYQGSSGDDCDEGLPPPDQ. Low complexity predominate over residues 31–43; that stretch reads SSRSSSDYQGSSG. A disulfide bridge connects residues Cys-67 and Cys-344. A glycan (N-linked (GlcNAc...) asparagine) is linked at Asn-141. Glu-151 functions as the Proton donor in the catalytic mechanism. Residues Asn-169 and Asn-361 are each glycosylated (N-linked (GlcNAc...) asparagine). Disulfide bonds link Cys-369/Cys-380, Cys-374/Cys-413, and Cys-415/Cys-424. The region spanning 413–424 is the EGF-like domain; sequence CRCYSAWEGACC.

It belongs to the glycosyl hydrolase 56 family. In terms of tissue distribution, expressed by the venom duct.

It localises to the secreted. The enzyme catalyses Random hydrolysis of (1-&gt;4)-linkages between N-acetyl-beta-D-glucosamine and D-glucuronate residues in hyaluronate.. Hyaluronidase catalyzes the hydrolysis of hyaluronic acid (HA), an anionic, nonsulfated glycosaminoglycan distributed widely throughout connective, epithelial, and neural tissues. In venom, they are known to enhance diffusion of the venom by degrading the extracellular matrix. The sequence is that of Hyaluronidase conohyal-Cn1 from Conus consors (Singed cone).